We begin with the raw amino-acid sequence, 1736 residues long: Collagen alpha-2(XI) chain (1736 aa).

Positions 1–27 (MERCSRCHHLLLLVLLLLWLSAAPAWA) are cleaved as a signal peptide. The Laminin G-like domain maps to 57–228 (DVAYRVSRPA…ESCDQKELEC (172 aa)). Positions 215–486 (QAAYESCDQK…ILQQARVALR (272 aa)) are nonhelical region. Disordered stretches follow at residues 229-465 (EGGW…DKGP) and 485-1539 (LRGP…SPGG). A compositionally biased stretch (polar residues) spans 258-270 (PQNQEPQAQSTES). A compositionally biased stretch (low complexity) spans 363–376 (ALSAETARSEAAAR). Collagen-like domains are found at residues 399–447 (GPPG…GPPG), 487–545 (GPPG…ADGA), and 546–587 (RGMP…PPGE). Positions 400–413 (PPGPEGPAGFPGPP) are enriched in pro residues. Residues 487–1500 (GPPGPMGYTG…PGHPGPPGEV (1014 aa)) are triple-helical region. Over residues 515-533 (DLGPQGPRGPQGLMGPPGK) the composition is skewed to low complexity. Positions 615–624 (KGPPGIPGPP) are enriched in pro residues. Residues 650-663 (QQGTPGTQGLPGPQ) are compositionally biased toward low complexity. The segment covering 765 to 774 (RGEDGPEGPK) has biased composition (basic and acidic residues). Low complexity predominate over residues 842–861 (PTGPRGQRGPRGATGKSGAK). Gly residues predominate over residues 994–1003 (GTAGGPGLKG). Positions 1029–1040 (IGPPGRPGPQGP) are enriched in pro residues. Collagen-like domains follow at residues 1072 to 1127 (GPAG…ADGE) and 1128 to 1172 (PGAR…ETGD). The span at 1115–1133 (PVGQPGAAGADGEPGARGP) shows a compositional bias: low complexity. Pro residues predominate over residues 1176 to 1187 (MGPPGPPGPRGP). Positions 1217 to 1230 (ESGSPGVQGEPGVK) are enriched in low complexity. Composition is skewed to basic and acidic residues over residues 1232–1241 (PRGERGEKGE) and 1287–1296 (DGAKGDRGED). Low complexity-rich tracts occupy residues 1341 to 1364 (PGAV…KPGP) and 1376 to 1386 (QQGRPGATGQA). The segment covering 1388-1397 (PPGPVGPPGL) has biased composition (pro residues). Positions 1413–1422 (PGLIGLIGPP) are enriched in low complexity. The region spanning 1444-1499 (GETGIPGASGPIGPGGPPGLPGPAGPKGAKGATGPAGPKGEKGVQGPPGHPGPPGE) is the Collagen-like 6 domain. Pro residues predominate over residues 1457–1467 (PGGPPGLPGPA). Over residues 1469 to 1481 (PKGAKGATGPAGP) the composition is skewed to low complexity. Residues 1501 to 1736 (IQPLPIQMPK…VLLGPVCFMG (236 aa)) constitute a propeptide, C-terminal propeptide. One can recognise a Fibrillar collagen NC1 domain in the interval 1541–1735 (EEIFGSLDSL…GVLLGPVCFM (195 aa)). A disulfide bond links C1571 and C1603. Ca(2+)-binding residues include D1589, N1591, Q1592, C1594, and D1597. N1604 and N1650 each carry an N-linked (GlcNAc...) asparagine glycan. Intrachain disulfides connect C1612/C1733 and C1655/C1689.

Belongs to the fibrillar collagen family. As to quaternary structure, trimers composed of three different chains: alpha 1(XI), alpha 2(XI), and alpha 3(XI). Alpha 3(XI) is a post-translational modification of alpha 1(II). Alpha 1(V) can also be found instead of alpha 3(XI)=1(II). In terms of processing, prolines at the third position of the tripeptide repeating unit (G-X-Y) are hydroxylated in some or all of the chains.

Its subcellular location is the secreted. It localises to the extracellular space. It is found in the extracellular matrix. May play an important role in fibrillogenesis by controlling lateral growth of collagen II fibrils. The protein is Collagen alpha-2(XI) chain (COL11A2) of Bos taurus (Bovine).